We begin with the raw amino-acid sequence, 704 residues long: Polyribonucleotide nucleotidyltransferase (704 aa).

Residues Asp-490 and Asp-496 each coordinate Mg(2+). Positions 557–616 (PKIEMIQIKPAKIKDVIGKGGETINSIIDETGVKIDIDQDGNVSIASSDAEMIKKAIKII) constitute a KH domain. One can recognise an S1 motif domain in the interval 626–694 (GQVYLAKVVR…KQGRVNVSRK (69 aa)).

The protein belongs to the polyribonucleotide nucleotidyltransferase family. The cofactor is Mg(2+).

It is found in the cytoplasm. It carries out the reaction RNA(n+1) + phosphate = RNA(n) + a ribonucleoside 5'-diphosphate. Involved in mRNA degradation. Catalyzes the phosphorolysis of single-stranded polyribonucleotides processively in the 3'- to 5'-direction. The polypeptide is Polyribonucleotide nucleotidyltransferase (Enterococcus faecalis (strain ATCC 700802 / V583)).